A 226-amino-acid chain; its full sequence is ATP-dependent dethiobiotin synthetase BioD (226 aa).

12–17 provides a ligand contact to ATP; sequence GVGKTV. Threonine 16 provides a ligand contact to Mg(2+). Lysine 37 is a catalytic residue. Threonine 41 lines the substrate pocket. ATP is bound by residues aspartate 49, 108-111, 169-170, and 197-199; these read EGAG, GS, and PAG. Mg(2+) contacts are provided by aspartate 49 and glutamate 108.

This sequence belongs to the dethiobiotin synthetase family. Homodimer. Mg(2+) serves as cofactor.

The protein resides in the cytoplasm. It carries out the reaction (7R,8S)-7,8-diammoniononanoate + CO2 + ATP = (4R,5S)-dethiobiotin + ADP + phosphate + 3 H(+). The protein operates within cofactor biosynthesis; biotin biosynthesis; biotin from 7,8-diaminononanoate: step 1/2. Functionally, catalyzes a mechanistically unusual reaction, the ATP-dependent insertion of CO2 between the N7 and N8 nitrogen atoms of 7,8-diaminopelargonic acid (DAPA, also called 7,8-diammoniononanoate) to form a ureido ring. The polypeptide is ATP-dependent dethiobiotin synthetase BioD (Mycobacterium tuberculosis (strain ATCC 25177 / H37Ra)).